The primary structure comprises 621 residues: Chaperone protein dnaK (621 aa).

Residues 597 to 621 form a disordered region; sequence VYSSTQQDNSKTEDGSVIDTNSKEA.

It belongs to the heat shock protein 70 family.

The protein localises to the plastid. It localises to the chloroplast. Functionally, acts as a chaperone. The protein is Chaperone protein dnaK of Gracilaria tenuistipitata var. liui (Red alga).